The primary structure comprises 549 residues: Oxygen-dependent choline dehydrogenase (549 aa).

4-33 provides a ligand contact to FAD; that stretch reads DYIIIGSGSAGSALAHRLSEDSRNSVIVLE. His-465 acts as the Proton acceptor in catalysis.

Belongs to the GMC oxidoreductase family. Requires FAD as cofactor.

The enzyme catalyses choline + A = betaine aldehyde + AH2. The catalysed reaction is betaine aldehyde + NAD(+) + H2O = glycine betaine + NADH + 2 H(+). Its pathway is amine and polyamine biosynthesis; betaine biosynthesis via choline pathway; betaine aldehyde from choline (cytochrome c reductase route): step 1/1. Involved in the biosynthesis of the osmoprotectant glycine betaine. Catalyzes the oxidation of choline to betaine aldehyde and betaine aldehyde to glycine betaine at the same rate. The chain is Oxygen-dependent choline dehydrogenase from Sinorhizobium fredii (strain NBRC 101917 / NGR234).